A 428-amino-acid chain; its full sequence is Histidinol dehydrogenase (428 aa).

3 residues coordinate substrate: Ser234, Gln256, and His259. Zn(2+) is bound by residues Gln256 and His259. Catalysis depends on proton acceptor residues Glu324 and His325. Residues His325, Asp358, Glu412, and His417 each contribute to the substrate site. Zn(2+) is bound at residue Asp358. Zn(2+) is bound at residue His417.

It belongs to the histidinol dehydrogenase family. Zn(2+) serves as cofactor.

The enzyme catalyses L-histidinol + 2 NAD(+) + H2O = L-histidine + 2 NADH + 3 H(+). It functions in the pathway amino-acid biosynthesis; L-histidine biosynthesis; L-histidine from 5-phospho-alpha-D-ribose 1-diphosphate: step 9/9. Functionally, catalyzes the sequential NAD-dependent oxidations of L-histidinol to L-histidinaldehyde and then to L-histidine. This is Histidinol dehydrogenase from Pelagibacter ubique (strain HTCC1062).